Consider the following 292-residue polypeptide: Secreted frizzled-related protein 2 (292 aa).

The signal sequence occupies residues 1–20 (MPRRLCALLLLASQCLGSTA). The FZ domain maps to 32 to 152 (YKRSNCKPIP…PKDNDLCIPL (121 aa)). 7 disulfides stabilise this stretch: Cys37-Cys100, Cys47-Cys93, Cys84-Cys122, Cys111-Cys149, Cys115-Cys139, Cys169-Cys242, and Cys187-Cys292. An NTR domain is found at 169–292 (CDACKNKNED…FSRSIRKLQC (124 aa)).

Belongs to the secreted frizzled-related protein (sFRP) family.

It localises to the secreted. Functionally, soluble frizzled-related proteins (sFRPS) function as modulators of Wnt signaling through direct interaction with Wnts. They have a role in regulating cell growth and differentiation in specific cell types. SFRP2 appears to be associated with myogenesis. The chain is Secreted frizzled-related protein 2 (SFRP2) from Gallus gallus (Chicken).